A 251-amino-acid polypeptide reads, in one-letter code: Triosephosphate isomerase (251 aa).

9-11 (NWK) provides a ligand contact to substrate. H95 acts as the Electrophile in catalysis. Residue E167 is the Proton acceptor of the active site. Substrate-binding positions include G173, S213, and 234–235 (GG). S213 carries the phosphoserine modification.

Belongs to the triosephosphate isomerase family. As to quaternary structure, homodimer.

It localises to the cytoplasm. The enzyme catalyses D-glyceraldehyde 3-phosphate = dihydroxyacetone phosphate. Its pathway is carbohydrate biosynthesis; gluconeogenesis. It functions in the pathway carbohydrate degradation; glycolysis; D-glyceraldehyde 3-phosphate from glycerone phosphate: step 1/1. Involved in the gluconeogenesis. Catalyzes stereospecifically the conversion of dihydroxyacetone phosphate (DHAP) to D-glyceraldehyde-3-phosphate (G3P). The polypeptide is Triosephosphate isomerase (Bacillus cytotoxicus (strain DSM 22905 / CIP 110041 / 391-98 / NVH 391-98)).